We begin with the raw amino-acid sequence, 821 residues long: Fibroblast growth factor receptor 2 (821 aa).

A signal peptide spans 1–21 (MVSWGRFICLVLVTMATLSLA). Residues 22–377 (RPSFSLVEDT…EITASPDYLE (356 aa)) lie on the Extracellular side of the membrane. The region spanning 25–125 (FSLVEDTTLE…ETWIFMVNVT (101 aa)) is the Ig-like C2-type 1 domain. Cys-62 and Cys-107 are oxidised to a cystine. N-linked (GlcNAc...) asparagine glycans are attached at residues Asn-83 and Asn-123. The tract at residues 129 to 151 (SSGDDEDDTDSSEDVVSENRSNQ) is disordered. Acidic residues predominate over residues 131 to 144 (GDDEDDTDSSEDVV). N-linked (GlcNAc...) asparagine glycosylation occurs at Asn-147. Ig-like C2-type domains are found at residues 154 to 247 (PYWT…YHLD) and 256 to 358 (PILQ…AWLT). The interval 161–178 (KMEKRLHACPAANTVKFR) is heparin-binding. A disulfide bond links Cys-179 and Cys-231. N-linked (GlcNAc...) asparagine glycosylation is found at Asn-228, Asn-241, Asn-265, Asn-297, Asn-318, and Asn-331. A disulfide bridge links Cys-278 with Cys-342. Residues 378 to 398 (IAIYCIGVFLIACMVVTVIFC) traverse the membrane as a helical segment. Over 399 to 821 (RMKTTTKKPD…YPHINGSVKT (423 aa)) the chain is Cytoplasmic. Tyr-466 bears the Phosphotyrosine; by autocatalysis mark. One can recognise a Protein kinase domain in the interval 481 to 770 (LTLGKPLGEG…LTLTTNEEYL (290 aa)). ATP contacts are provided by residues 487 to 495 (LGEGCFGQV), Lys-517, 565 to 567 (EYA), and Asn-571. Phosphotyrosine; by autocatalysis occurs at positions 586 and 588. Asp-626 acts as the Proton acceptor in catalysis. Phosphotyrosine; by autocatalysis is present on residues Tyr-656, Tyr-657, and Tyr-769. Ser-780 is subject to Phosphoserine.

The protein belongs to the protein kinase superfamily. Tyr protein kinase family. Fibroblast growth factor receptor subfamily. As to quaternary structure, monomer. Homodimer after ligand binding. Interacts predominantly with FGF1 and FGF2, but can also interact with FGF3, FGF4, FGF6, FGF7, FGF8, FGF9, FGF10, FGF17, FGF18 and FGF22 (in vitro). Ligand specificity is determined by tissue-specific expression of isoforms, and differences in the third Ig-like domain are crucial for ligand specificity. Affinity for fibroblast growth factors (FGFs) is increased by heparan sulfate glycosaminoglycans that function as coreceptors. Likewise, KLB increases the affinity for FGF19 and FGF21. Interacts with PLCG1. Interacts with GRB2 and PAK4. Interacts with FLRT2. In terms of processing, autophosphorylated. Binding of FGF family members together with heparan sulfate proteoglycan or heparin promotes receptor dimerization and autophosphorylation on tyrosine residues. Autophosphorylation occurs in trans between the two FGFR molecules present in the dimer. N-glycosylated in the endoplasmic reticulum. The N-glycan chains undergo further maturation to an Endo H-resistant form in the Golgi apparatus. Post-translationally, ubiquitinated. FGFR2 is rapidly ubiquitinated after autophosphorylation, leading to internalization and degradation. Subject to degradation both in lysosomes and by the proteasome.

It is found in the cell membrane. Its subcellular location is the golgi apparatus. The protein resides in the cytoplasmic vesicle. The enzyme catalyses L-tyrosyl-[protein] + ATP = O-phospho-L-tyrosyl-[protein] + ADP + H(+). Present in an inactive conformation in the absence of bound ligand. Ligand binding leads to dimerization and activation by autophosphorylation on tyrosine residues. Functionally, tyrosine-protein kinase that acts as a cell-surface receptor for fibroblast growth factors and plays an essential role in the regulation of cell proliferation, differentiation, migration and apoptosis, and in the regulation of embryonic development. Required for normal embryonic patterning, trophoblast function, limb bud development, lung morphogenesis, osteogenesis and skin development. Plays an essential role in the regulation of osteoblast differentiation, proliferation and apoptosis, and is required for normal skeleton development. Promotes cell proliferation in keratinocytes and immature osteoblasts, but promotes apoptosis in differentiated osteoblasts. Phosphorylates PLCG1, FRS2 and PAK4. Ligand binding leads to the activation of several signaling cascades. Activation of PLCG1 leads to the production of the cellular signaling molecules diacylglycerol and inositol 1,4,5-trisphosphate. Phosphorylation of FRS2 triggers recruitment of GRB2, GAB1, PIK3R1 and SOS1, and mediates activation of RAS, MAPK1/ERK2, MAPK3/ERK1 and the MAP kinase signaling pathway, as well as of the AKT1 signaling pathway. FGFR2 signaling is down-regulated by ubiquitination, internalization and degradation. Mutations that lead to constitutive kinase activation or impair normal FGFR2 maturation, internalization and degradation lead to aberrant signaling. Over-expressed FGFR2 promotes activation of STAT1. The protein is Fibroblast growth factor receptor 2 (Fgfr2) of Mus musculus (Mouse).